Consider the following 618-residue polypeptide: Nuclear cap-binding protein subunit 3 (618 aa).

Residues 1-53 are disordered; that stretch reads MAAVRGLRVSVKAGGGAEPEPMEVEEGEVEAAAGRTSPVEATADQTSPREVVP. Residues 20-29 show a composition bias toward acidic residues; sequence EPMEVEEGEV. The interval 117–178 is RNA recognition motif (RRM) domain; sequence ETLYICGVDE…LSSKPTNEKG (62 aa). Residues 146-149 carry the WLDD motif; essential for 7-methylguanosine-containing mRNA cap binding motif; sequence WLDD. Disordered stretches follow at residues 170–250, 342–366, and 426–618; these read SSKP…DLRP, PEEPIEEEEEEEEEEEEDMDEDDRV, and QLKT…DTDS. Residues 174–188 are compositionally biased toward basic and acidic residues; sequence TNEKGQRKKDGEHRS. The span at 205–223 shows a compositional bias: acidic residues; it reads DETEEGEVEEDNPNDAEVE. A compositionally biased stretch (polar residues) spans 231-240; that stretch reads PPETLSQAEQ. Acidic residues predominate over residues 344–365; sequence EPIEEEEEEEEEEEEDMDEDDR. The segment covering 436-450 has biased composition (polar residues); sequence SDSAGNSVKSRIGSK. A compositionally biased stretch (basic and acidic residues) spans 451-468; it reads SHSEKPADVRLILEEKRQ. Over residues 469–481 the composition is skewed to low complexity; sequence STASRQQSSSSGK. Composition is skewed to basic and acidic residues over residues 507–517, 550–562, and 583–596; these read SRREPLSDVHS, PKEKDRASEKSGE, and IKEKEQIRQKKSRL. Low complexity predominate over residues 609 to 618; it reads ESSSGSDTDS.

It belongs to the NCBP3 family. In terms of assembly, component of an alternative cap-binding complex (CBC) composed of NCBP1/CBP80 and NCBP3.

The protein localises to the nucleus. The protein resides in the cytoplasm. In terms of biological role, associates with NCBP1/CBP80 to form an alternative cap-binding complex (CBC) which plays a key role in mRNA export. NCBP3 serves as adapter protein linking the capped RNAs (m7GpppG-capped RNA) to NCBP1/CBP80. Unlike the conventional CBC with NCBP2 which binds both small nuclear RNA (snRNA) and messenger (mRNA) and is involved in their export from the nucleus, the alternative CBC with NCBP3 does not bind snRNA and associates only with mRNA thereby playing a role in only mRNA export. This chain is Nuclear cap-binding protein subunit 3, found in Xenopus laevis (African clawed frog).